The primary structure comprises 425 residues: Serine--tRNA ligase (425 aa).

Residue 228–230 (TAE) participates in L-serine binding. 259-261 (RSE) serves as a coordination point for ATP. E282 is an L-serine binding site. 346 to 349 (EIAS) contacts ATP. S382 contacts L-serine.

Belongs to the class-II aminoacyl-tRNA synthetase family. Type-1 seryl-tRNA synthetase subfamily. In terms of assembly, homodimer. The tRNA molecule binds across the dimer.

The protein resides in the cytoplasm. It catalyses the reaction tRNA(Ser) + L-serine + ATP = L-seryl-tRNA(Ser) + AMP + diphosphate + H(+). The catalysed reaction is tRNA(Sec) + L-serine + ATP = L-seryl-tRNA(Sec) + AMP + diphosphate + H(+). It functions in the pathway aminoacyl-tRNA biosynthesis; selenocysteinyl-tRNA(Sec) biosynthesis; L-seryl-tRNA(Sec) from L-serine and tRNA(Sec): step 1/1. Catalyzes the attachment of serine to tRNA(Ser). Is also able to aminoacylate tRNA(Sec) with serine, to form the misacylated tRNA L-seryl-tRNA(Sec), which will be further converted into selenocysteinyl-tRNA(Sec). The chain is Serine--tRNA ligase from Rickettsia africae (strain ESF-5).